We begin with the raw amino-acid sequence, 115 residues long: uncharacterized protein (115 aa).

This is an uncharacterized protein from Acanthamoeba polyphaga (Amoeba).